The primary structure comprises 86 residues: UPF0457 protein SSP0714 (86 aa).

The protein belongs to the UPF0457 family.

This Staphylococcus saprophyticus subsp. saprophyticus (strain ATCC 15305 / DSM 20229 / NCIMB 8711 / NCTC 7292 / S-41) protein is UPF0457 protein SSP0714.